The sequence spans 265 residues: Mlc titration factor A (265 aa).

4 residues coordinate Zn(2+): His-111, His-148, His-152, and Glu-211.

Belongs to the MtfA family. In terms of assembly, interacts with Mlc. Zn(2+) serves as cofactor.

Its subcellular location is the cytoplasm. Involved in the modulation of the activity of the glucose-phosphotransferase system (glucose-PTS). Interacts with the transcriptional repressor Mlc, preventing its interaction with DNA and leading to the modulation of expression of genes regulated by Mlc, including ptsG, which encodes the PTS system glucose-specific EIICB component. Functionally, shows zinc-dependent metallopeptidase activity. This is Mlc titration factor A from Salmonella paratyphi A (strain AKU_12601).